A 424-amino-acid chain; its full sequence is 3-ketoacyl-CoA thiolase, peroxisomal (424 aa).

A peroxisome-targeting transit peptide spans 1 to 26 (MQRLQVVLGHLRGPADSGWMPQAAPC). Residues 1–26 (MQRLQVVLGHLRGPADSGWMPQAAPC) form a PTS2-type peroxisomal targeting signal region. A phosphothreonine mark is found at Thr59 and Thr60. The active-site Acyl-thioester intermediate is Cys123. Active-site proton acceptor residues include His377 and Cys408.

Belongs to the thiolase-like superfamily. Thiolase family. Homodimer. Interacts (via PTS2-type peroxisomal targeting signal region) with PEX7; leading to its translocation into peroxisomes.

The protein resides in the peroxisome. It carries out the reaction an acyl-CoA + acetyl-CoA = a 3-oxoacyl-CoA + CoA. The enzyme catalyses 2 acetyl-CoA = acetoacetyl-CoA + CoA. The catalysed reaction is tetradecanoyl-CoA + acetyl-CoA = 3-oxohexadecanoyl-CoA + CoA. It catalyses the reaction hexanoyl-CoA + acetyl-CoA = 3-oxooctanoyl-CoA + CoA. It carries out the reaction 3-oxohexadecanedioyl-CoA + CoA = tetradecanedioyl-CoA + acetyl-CoA. The enzyme catalyses 3-oxo-(6Z,9Z,12Z,15Z,18Z,21Z)-tetracosahexaenoyl-CoA + CoA = (4Z,7Z,10Z,13Z,16Z,19Z)-docosahexaenoyl-CoA + acetyl-CoA. It participates in lipid metabolism; peroxisomal fatty acid beta-oxidation. Its function is as follows. Responsible for the thiolytic cleavage of straight chain 3-keto fatty acyl-CoAs (3-oxoacyl-CoAs). Plays an important role in fatty acid peroxisomal beta-oxidation. Catalyzes the cleavage of short, medium, long, and very long straight chain 3-oxoacyl-CoAs. The protein is 3-ketoacyl-CoA thiolase, peroxisomal of Homo sapiens (Human).